We begin with the raw amino-acid sequence, 136 residues long: MSIIKEFREFAMRGNVVDLAVGVIIGAAFGKIVSSLVADIIMPPLGLLIGGIDFKQFAVTLRDAQGDIPAVVMHYGVFIQNVFDFLIVAFAIFMAIKLINKLNRKKEEPAAAPAPTKEEVLLAEIRDLLKEQNNRS.

2 consecutive transmembrane segments (helical) span residues 10–30 (FAMRGNVVDLAVGVIIGAAFG) and 76–96 (GVFIQNVFDFLIVAFAIFMAI).

Belongs to the MscL family. Homopentamer.

The protein localises to the cell inner membrane. In terms of biological role, channel that opens in response to stretch forces in the membrane lipid bilayer. May participate in the regulation of osmotic pressure changes within the cell. The polypeptide is Large-conductance mechanosensitive channel (Shigella boydii serotype 18 (strain CDC 3083-94 / BS512)).